Consider the following 456-residue polypeptide: Frizzled/smoothened-like sans CRD protein F (456 aa).

Residues methionine 1–serine 30 form the signal peptide. The Extracellular portion of the chain corresponds to glutamine 31 to lysine 92. Asparagine 34, asparagine 52, and asparagine 70 each carry an N-linked (GlcNAc...) asparagine glycan. Residues phenylalanine 93–valine 113 form a helical membrane-spanning segment. Residues threonine 114 to threonine 127 lie on the Cytoplasmic side of the membrane. A helical transmembrane segment spans residues isoleucine 128–phenylalanine 148. Residues glycine 149–serine 174 lie on the Extracellular side of the membrane. Asparagine 151 is a glycosylation site (N-linked (GlcNAc...) asparagine). The helical transmembrane segment at serine 175–phenylalanine 195 threads the bilayer. The Cytoplasmic portion of the chain corresponds to aspartate 196–lysine 211. A helical transmembrane segment spans residues tyrosine 212–aspartate 232. Residues glutamine 233–leucine 252 are Extracellular-facing. The helical transmembrane segment at isoleucine 253–isoleucine 273 threads the bilayer. Over leucine 274–leucine 297 the chain is Cytoplasmic. The chain crosses the membrane as a helical span at residues isoleucine 298 to valine 318. At valine 319–serine 354 the chain is on the extracellular side. Residues glutamate 355–isoleucine 375 form a helical membrane-spanning segment. At asparagine 376–isoleucine 456 the chain is on the cytoplasmic side. Residues alanine 403–threonine 422 are disordered.

The protein belongs to the G-protein coupled receptor Fz/Smo family.

The protein resides in the membrane. This Dictyostelium discoideum (Social amoeba) protein is Frizzled/smoothened-like sans CRD protein F (fscF).